The sequence spans 337 residues: 1-aminocyclopropane-1-carboxylate deaminase (337 aa).

N6-(pyridoxal phosphate)lysine is present on lysine 50. Catalysis depends on serine 77, which acts as the Nucleophile.

Belongs to the ACC deaminase/D-cysteine desulfhydrase family. In terms of assembly, homotrimer. It depends on pyridoxal 5'-phosphate as a cofactor.

It carries out the reaction 1-aminocyclopropane-1-carboxylate + H2O = 2-oxobutanoate + NH4(+). Catalyzes a cyclopropane ring-opening reaction, the irreversible conversion of 1-aminocyclopropane-1-carboxylate (ACC) to ammonia and alpha-ketobutyrate. Allows growth on ACC as a nitrogen source. The polypeptide is 1-aminocyclopropane-1-carboxylate deaminase (Methylobacterium sp. (strain 4-46)).